Consider the following 492-residue polypeptide: Fascin-2 (492 aa).

This sequence belongs to the fascin family. As to expression, expressed in the inner ear. Abundant in the utricle.

It is found in the cytoplasm. It localises to the cytoskeleton. Its subcellular location is the cell projection. The protein localises to the stereocilium. Its function is as follows. Acts as an actin bundling protein. May play a pivotal role in photoreceptor cell-specific events, such as disk morphogenesis. Important for maintaining functional hair-cell bundles in the inner ear. May stiffen the longer stereocilia of hair-cell bundles in the inner ear enabling better force transmission to tip links. The sequence is that of Fascin-2 (Fscn2) from Mus musculus (Mouse).